The chain runs to 1122 residues: Angiopoietin-1 receptor (1122 aa).

Residues 1-22 (MDSLAGLVLCGVSLLLYGVVEG) form the signal peptide. Over 23–746 (AMDLILINSL…SADLGGGKML (724 aa)) the chain is Extracellular. Cysteines 44 and 102 form a disulfide. An Ig-like C2-type 1 domain is found at 44 to 123 (CIASGWHPHE…RTMKMRQQAS (80 aa)). Residues asparagine 140 and asparagine 158 are each glycosylated (N-linked (GlcNAc...) asparagine). EGF-like domains are found at residues 210–252 (RCEA…RTCE), 254–299 (ACEP…LQCN), and 301–341 (ACPS…LQCE). 13 disulfide bridges follow: cysteine 211/cysteine 220, cysteine 224/cysteine 233, cysteine 227/cysteine 240, cysteine 242/cysteine 251, cysteine 255/cysteine 264, cysteine 268/cysteine 274, cysteine 280/cysteine 287, cysteine 289/cysteine 298, cysteine 302/cysteine 311, cysteine 315/cysteine 323, cysteine 317/cysteine 329, cysteine 331/cysteine 340, and cysteine 370/cysteine 424. The region spanning 350–440 (PQIEDLPDHI…GMVEKPFNIS (91 aa)) is the Ig-like C2-type 2 domain. Residues asparagine 399, asparagine 438, asparagine 464, asparagine 558, asparagine 595, asparagine 648, and asparagine 690 are each glycosylated (N-linked (GlcNAc...) asparagine). 3 consecutive Fibronectin type-III domains span residues 444–539 (LPEP…TASI), 543–635 (PPRG…TLSD), and 640–733 (QPEN…TLPH). A helical transmembrane segment spans residues 747 to 767 (LIAILGSAGMTCITVLLAFLI). Residues 768–1122 (MLQLKRANVQ…GIDCSAEEAA (355 aa)) are Cytoplasmic-facing. The region spanning 822 to 1094 (IKFQDVIGEG…QILVSLNRML (273 aa)) is the Protein kinase domain. Residues 828-836 (IGEGNFGQV) and lysine 853 contribute to the ATP site. Residue tyrosine 858 is modified to Phosphotyrosine; by autocatalysis. Residue aspartate 962 is the Proton acceptor of the active site. 3 positions are modified to phosphotyrosine; by autocatalysis: tyrosine 990, tyrosine 1100, and tyrosine 1106.

The protein belongs to the protein kinase superfamily. Tyr protein kinase family. Tie subfamily. In terms of assembly, homodimer. Heterodimer with TIE1. Interacts with ANGPT1, ANGPT2 and ANGPT4. At cell-cell contacts in quiescent cells, forms a signaling complex composed of ANGPT1 plus TEK molecules from two adjoining cells. In the absence of endothelial cell-cell contacts, interaction with ANGPT1 mediates contacts with the extracellular matrix. Interacts (tyrosine phosphorylated) with TNIP2. Interacts (tyrosine phosphorylated) with SHC1 (via SH2 domain). Interacts with PTPRB; this promotes endothelial cell-cell adhesion. Interacts with DOK2, GRB2, GRB7, GRB14, PIK3R1 and PTPN11/SHP2. Colocalizes with DOK2 at contacts with the extracellular matrix in migrating cells. Proteolytic processing leads to the shedding of the extracellular domain (soluble TIE-2 alias sTIE-2). In terms of processing, autophosphorylated on tyrosine residues in response to ligand binding. Autophosphorylation occurs in trans, i.e. one subunit of the dimeric receptor phosphorylates tyrosine residues on the other subunit. Autophosphorylation occurs in a sequential manner, where Tyr-990 in the kinase activation loop is phosphorylated first, followed by autophosphorylation at Tyr-1106 and at additional tyrosine residues. ANGPT1-induced phosphorylation is impaired during hypoxia, due to increased expression of ANGPT2. Phosphorylation is important for interaction with GRB14, PIK3R1 and PTPN11. Phosphorylation at Tyr-1100 is important for interaction with GRB2 and GRB7. Phosphorylation at Tyr-1106 is important for interaction with DOK2 and for coupling to downstream signal transduction pathways in endothelial cells. Dephosphorylated by PTPRB. Post-translationally, ubiquitinated. The phosphorylated receptor is ubiquitinated and internalized, leading to its degradation. Specifically expressed in developing vascular endothelial cells. Abundantly expressed in lung and heart, moderately in brain, liver and kidney, and weakly in thymus, spleen and testis.

The protein resides in the cell membrane. The protein localises to the cell junction. It is found in the focal adhesion. It localises to the cytoplasm. Its subcellular location is the cytoskeleton. The protein resides in the secreted. The catalysed reaction is L-tyrosyl-[protein] + ATP = O-phospho-L-tyrosyl-[protein] + ADP + H(+). Its activity is regulated as follows. Angiopoietin binding leads to receptor dimerization and activation by autophosphorylation at Tyr-990 on the kinase activation loop. Functionally, tyrosine-protein kinase that acts as a cell-surface receptor for ANGPT1, ANGPT2 and ANGPT4 and regulates angiogenesis, endothelial cell survival, proliferation, migration, adhesion and cell spreading, reorganization of the actin cytoskeleton, but also maintenance of vascular quiescence. Has anti-inflammatory effects by preventing the leakage of pro-inflammatory plasma proteins and leukocytes from blood vessels. Required for normal angiogenesis and heart development during embryogenesis. Required for postnatal hematopoiesis. After birth, activates or inhibits angiogenesis, depending on the context. Inhibits angiogenesis and promotes vascular stability in quiescent vessels, where endothelial cells have tight contacts. In quiescent vessels, ANGPT1 oligomers recruit TEK to cell-cell contacts, forming complexes with TEK molecules from adjoining cells, and this leads to preferential activation of phosphatidylinositol 3-kinase and the AKT1 signaling cascades. In migrating endothelial cells that lack cell-cell adhesions, ANGT1 recruits TEK to contacts with the extracellular matrix, leading to the formation of focal adhesion complexes, activation of PTK2/FAK and of the downstream kinases MAPK1/ERK2 and MAPK3/ERK1, and ultimately to the stimulation of sprouting angiogenesis. ANGPT1 signaling triggers receptor dimerization and autophosphorylation at specific tyrosine residues that then serve as binding sites for scaffold proteins and effectors. Signaling is modulated by ANGPT2 that has lower affinity for TEK, can promote TEK autophosphorylation in the absence of ANGPT1, but inhibits ANGPT1-mediated signaling by competing for the same binding site. Signaling is also modulated by formation of heterodimers with TIE1, and by proteolytic processing that gives rise to a soluble TEK extracellular domain. The soluble extracellular domain modulates signaling by functioning as decoy receptor for angiopoietins. TEK phosphorylates DOK2, GRB7, GRB14, PIK3R1, SHC1 and TIE1. The polypeptide is Angiopoietin-1 receptor (Tek) (Mus musculus (Mouse)).